Consider the following 441-residue polypeptide: Ribulose bisphosphate carboxylase large chain (441 aa).

2 residues coordinate substrate: N89 and T139. The active-site Proton acceptor is K141. K143 serves as a coordination point for substrate. Residues K167, D169, and E170 each coordinate Mg(2+). The residue at position 167 (K167) is an N6-carboxylysine. The active-site Proton acceptor is the H260. Positions 261 and 345 each coordinate substrate.

This sequence belongs to the RuBisCO large chain family. Type I subfamily. As to quaternary structure, heterohexadecamer of 8 large chains and 8 small chains; disulfide-linked. The disulfide link is formed within the large subunit homodimers. Mg(2+) is required as a cofactor. Post-translationally, the disulfide bond which can form in the large chain dimeric partners within the hexadecamer appears to be associated with oxidative stress and protein turnover.

It is found in the plastid. It localises to the chloroplast. It carries out the reaction 2 (2R)-3-phosphoglycerate + 2 H(+) = D-ribulose 1,5-bisphosphate + CO2 + H2O. The enzyme catalyses D-ribulose 1,5-bisphosphate + O2 = 2-phosphoglycolate + (2R)-3-phosphoglycerate + 2 H(+). Functionally, ruBisCO catalyzes two reactions: the carboxylation of D-ribulose 1,5-bisphosphate, the primary event in carbon dioxide fixation, as well as the oxidative fragmentation of the pentose substrate in the photorespiration process. Both reactions occur simultaneously and in competition at the same active site. The sequence is that of Ribulose bisphosphate carboxylase large chain from Asclepias exaltata (Poke milkweed).